Here is a 99-residue protein sequence, read N- to C-terminus: Nucleoid-associated protein SSA_0326 (99 aa).

Positions 1–15 (MMNMQSMMKQAQKLQ) are enriched in low complexity. The tract at residues 1–23 (MMNMQSMMKQAQKLQKQMEKGQA) is disordered.

This sequence belongs to the YbaB/EbfC family. In terms of assembly, homodimer.

The protein resides in the cytoplasm. The protein localises to the nucleoid. Binds to DNA and alters its conformation. May be involved in regulation of gene expression, nucleoid organization and DNA protection. The sequence is that of Nucleoid-associated protein SSA_0326 from Streptococcus sanguinis (strain SK36).